A 180-amino-acid chain; its full sequence is Formate hydrogenlyase subunit 6 (180 aa).

4Fe-4S ferredoxin-type domains lie at 31 to 60 (GKPEQNPQQCIGCAACVNACPSNALTVETD) and 66 to 95 (LAWEFNLGHCIFCGRCEEVCPTAAIKLSQE). Residues Cys-40, Cys-43, Cys-46, Cys-50, Cys-75, Cys-78, Cys-81, and Cys-85 each contribute to the [4Fe-4S] cluster site.

As to quaternary structure, FHL comprises of a formate dehydrogenase, unidentified electron carriers and a hydrogenase (isoenzyme 3). In this non-energy conserving pathway, molecular hydrogen and carbodioxide are released from formate.

Probable electron transfer protein for hydrogenase 3. In Escherichia coli (strain K12), this protein is Formate hydrogenlyase subunit 6 (hycF).